The sequence spans 662 residues: Acetyl-coenzyme A synthetase (662 aa).

CoA is bound by residues 197–200 (RKGK) and Thr317. ATP contacts are provided by residues 393–395 (GEP), 417–422 (DTWWQT), Asp510, and Arg525. Residue Ser533 coordinates CoA. Position 536 (Arg536) interacts with ATP. Mg(2+) is bound by residues His549 and Val552. An N6-acetyllysine modification is found at Lys623.

It belongs to the ATP-dependent AMP-binding enzyme family. Mg(2+) is required as a cofactor. In terms of processing, acetylated. Deacetylation by the SIR2-homolog deacetylase activates the enzyme.

It catalyses the reaction acetate + ATP + CoA = acetyl-CoA + AMP + diphosphate. In terms of biological role, catalyzes the conversion of acetate into acetyl-CoA (AcCoA), an essential intermediate at the junction of anabolic and catabolic pathways. AcsA undergoes a two-step reaction. In the first half reaction, AcsA combines acetate with ATP to form acetyl-adenylate (AcAMP) intermediate. In the second half reaction, it can then transfer the acetyl group from AcAMP to the sulfhydryl group of CoA, forming the product AcCoA. This Helicobacter pylori (strain P12) protein is Acetyl-coenzyme A synthetase.